The sequence spans 362 residues: MNSCDFRVFLQEFGTTVHLSLPGSVSEKERLLLKLLMQGMSVTEISQYRNRSAKTISHQKKQLFEKLGIQSDITFWRDIFFQYNPEIISATGSNSHRYINDNHYHHIVTPEAISLALENHEFKPWIQPVFCAQTGVLTGCEVLVRWEHPQTGIIPPDQFIPLAESSGLIVIMTRQLMKQTADILMPVKHLLPDNFHIGINVSAGCFLAAGFEKECLNLVNKLGNDKIKLVLELTERNPIPVTPEARAIFDSLHQHNITFALDDFGTGYATYRYLQAFPVDFIKIDKSFVQMASVDEISGHIVDNIVELARKPGLSIVAEGVETQEQADLMIGKGVHFLQGYLYSPPVPGNKFISEWVMKAGG.

The region spanning 18-83 is the HTH luxR-type domain; the sequence is HLSLPGSVSE…TFWRDIFFQY (66 aa). Positions 42-61 form a DNA-binding region, H-T-H motif; the sequence is VTEISQYRNRSAKTISHQKK. Residues 106–360 enclose the EAL domain; sequence HIVTPEAISL…KFISEWVMKA (255 aa). Glutamine 127 provides a ligand contact to substrate. Mg(2+) is bound at residue glutamate 141. Substrate contacts are provided by residues 144–145 and asparagine 200; that span reads VR. Residues asparagine 200, glutamate 232, and aspartate 262 each contribute to the Mg(2+) site. Substrate is bound by residues aspartate 262, lysine 286, 319–322, and tyrosine 341; that span reads EGVE.

As to quaternary structure, is in a fast thermodynamic monomer-homodimer equilibrium. Dimerization is required for PDE activity. Dimerization affinity is increased about 100-fold upon substrate binding. It depends on Mg(2+) as a cofactor. Requires Mn(2+) as cofactor.

The enzyme catalyses 3',3'-c-di-GMP + H2O = 5'-phosphoguanylyl(3'-&gt;5')guanosine + H(+). Its activity is regulated as follows. Strongly inhibited by Ca(2+). Acts both as an enzyme and as a c-di-GMP sensor to couple transcriptional activity to the c-di-GMP status of the cell. Phosphodiesterase (PDE) that catalyzes the hydrolysis of cyclic-di-GMP (c-di-GMP) to 5'-pGpG. Also acts as a transcription factor to control its own expression. In Escherichia coli (strain K12), this protein is Cyclic di-GMP phosphodiesterase PdeL.